Here is a 334-residue protein sequence, read N- to C-terminus: Mediator of RNA polymerase II transcription subunit 4 (334 aa).

Residues 71–100 (QEREQLIRTLEAHVEKRDEVIQQLETNLKS) are a coiled coil. A disordered region spans residues 193-334 (PLITSPSASS…ASKKTGSSNK (142 aa)). Composition is skewed to polar residues over residues 194–206 (LITS…SNGG) and 251–282 (NEKQ…SSPN).

It belongs to the Mediator complex subunit 4 family. In terms of assembly, component of the Mediator complex.

It localises to the nucleus. In terms of biological role, component of the Mediator complex, a coactivator involved in the regulated transcription of nearly all RNA polymerase II-dependent genes. Mediator functions as a bridge to convey information from gene-specific regulatory proteins to the basal RNA polymerase II transcription machinery. Mediator is recruited to promoters by direct interactions with regulatory proteins and serves as a scaffold for the assembly of a functional preinitiation complex with RNA polymerase II and the general transcription factors. This is Mediator of RNA polymerase II transcription subunit 4 (mdt-4) from Caenorhabditis elegans.